The sequence spans 310 residues: Putative F-box protein PP2-B2 (310 aa).

The segment at 1–34 is disordered; it reads MIQSTMGHKQSVDSRGKGRKVPGSSSMVQKHRVE. The 47-residue stretch at 44 to 90 folds into the F-box domain; the sequence is PSLFDNLPEDCISNIISFTSPRDACVAASVSKTFESAVNSDSVWDKF.

The sequence is that of Putative F-box protein PP2-B2 (PP2B2) from Arabidopsis thaliana (Mouse-ear cress).